Consider the following 88-residue polypeptide: Small ribosomal subunit protein uS17 (88 aa).

Belongs to the universal ribosomal protein uS17 family. In terms of assembly, part of the 30S ribosomal subunit.

Its function is as follows. One of the primary rRNA binding proteins, it binds specifically to the 5'-end of 16S ribosomal RNA. The polypeptide is Small ribosomal subunit protein uS17 (Vesicomyosocius okutanii subsp. Calyptogena okutanii (strain HA)).